The chain runs to 218 residues: MTDIRDTDALFALADRVTGFMPADEGRTLYETAVRYLGDGVGVEIGTYCGKSTVLLGAAARQTGGVVFTVDHHHGSEEHQPGWEYHDPSLVDPVTGLFDTLPRLRHTLDEADLYDHVVAVVGKSAVVARGWRTPLRFLFIDGGHTEEAAQRDFDGWARWVEVGGALVIHDVFPDPKDGGQAPFHIYQRALNTGDFREVNAYGSMRVLERTSGIAGQPL.

S-adenosyl-L-methionine-binding residues include Phe20, Gly46, Ser52, Asp71, Gly75, and Ser124. Asp141 lines the Mg(2+) pocket. The active-site Proton acceptor is His144. Residue Arg151 participates in S-adenosyl-L-methionine binding. His169 and Asp170 together coordinate Mg(2+).

Belongs to the methyltransferase superfamily. In terms of assembly, homodimer. It depends on Mg(2+) as a cofactor.

The enzyme catalyses 3,3'-di-O-methyl-4alpha-mannobiose + S-adenosyl-L-methionine = 1,3,3'-tri-O-methyl-4alpha-mannobiose + S-adenosyl-L-homocysteine + H(+). Inhibited by EDTA. In terms of biological role, involved in the biosynthesis of 3-O-methylmannose polysaccharides (MMP), which are intracellular polymethylated polysaccharides implicated in the modulation of fatty acid metabolism in non-tuberculous mycobacteria. Specifically methylates the 1-OH position of 3,3'-di-O-methyl-4alpha-mannobiose, a probable early precursor of MMP, yielding the reducing end dimannoside of MMP. This is MMP 1-O-methyltransferase from Mycolicibacterium hassiacum (strain DSM 44199 / CIP 105218 / JCM 12690 / 3849) (Mycobacterium hassiacum).